A 574-amino-acid polypeptide reads, in one-letter code: Iron hydrogenase 1 (574 aa).

Residues 1 to 78 (MKTIIINGVQ…GMIINTNSDA (78 aa)) enclose the 2Fe-2S ferredoxin-type domain. [2Fe-2S] cluster is bound by residues cysteine 34, cysteine 46, cysteine 49, and cysteine 62. In terms of domain architecture, 4Fe-4S His(Cys)3-ligated-type spans 78 to 117 (AVNEKIKSRISQLLDIHEFKCGPCNRRENCEFLKLVIKYK). Residues histidine 94, cysteine 98, cysteine 101, cysteine 107, cysteine 147, cysteine 150, cysteine 153, cysteine 157, cysteine 190, cysteine 193, cysteine 196, cysteine 200, cysteine 300, cysteine 355, cysteine 499, and cysteine 503 each coordinate [4Fe-4S] cluster. 2 4Fe-4S ferredoxin-type domains span residues 138-167 (KSLT…YAMK) and 181-210 (DEKC…EKSH). Cysteine 503 is a Fe(2+) binding site.

As to quaternary structure, monomer. The cofactor is [2Fe-2S] cluster. [4Fe-4S] cluster is required as a cofactor. Fe(2+) serves as cofactor.

The enzyme catalyses H2 + 2 oxidized [2Fe-2S]-[ferredoxin] = 2 reduced [2Fe-2S]-[ferredoxin] + 2 H(+). The protein is Iron hydrogenase 1 of Clostridium pasteurianum.